Here is a 266-residue protein sequence, read N- to C-terminus: Ribonuclease 3 (266 aa).

Positions 8–130 (LARLTKKLGY…IIGAVYLDSN (123 aa)) constitute an RNase III domain. E43 serves as a coordination point for Mg(2+). D47 is an active-site residue. Mg(2+) is bound by residues D116 and E119. E119 is an active-site residue. In terms of domain architecture, DRBM spans 157–227 (DPKTRLQEFL…AQQILALIEK (71 aa)). The segment at 229-266 (REQEKEVKIKPTKQAKLANPRHTKSNPSSSSKKSSTRK) is disordered. A compositionally biased stretch (low complexity) spans 253–266 (SNPSSSSKKSSTRK).

The protein belongs to the ribonuclease III family. Homodimer. The cofactor is Mg(2+).

It localises to the cytoplasm. It carries out the reaction Endonucleolytic cleavage to 5'-phosphomonoester.. Functionally, digests double-stranded RNA. Involved in the processing of primary rRNA transcript to yield the immediate precursors to the large and small rRNAs (23S and 16S). Processes some mRNAs, and tRNAs when they are encoded in the rRNA operon. Processes pre-crRNA and tracrRNA of type II CRISPR loci if present in the organism. The protein is Ribonuclease 3 of Colwellia psychrerythraea (strain 34H / ATCC BAA-681) (Vibrio psychroerythus).